The following is a 3063-amino-acid chain: Genome polyprotein (3063 aa).

A Peptidase S30 domain is found at 141 to 284; it reads KLTEGQMNHL…QSILNSMIQF (144 aa). Residues His192, Asp201, and Ser235 each act as for P1 proteinase activity in the active site. The short motif at 334–337 is the Involved in interaction with stylet and aphid transmission element; sequence KITC. Residues 592–594 carry the Involved in virions binding and aphid transmission motif; the sequence is PTK. One can recognise a Peptidase C6 domain in the interval 618 to 740; that stretch reads LYIAKQGYCY…ESDIKHYRVG (123 aa). Catalysis depends on for helper component proteinase activity residues Cys626 and His699. The Helicase ATP-binding domain occupies 1229 to 1381; the sequence is DIAHSEHLDF…TQQPVKLIVE (153 aa). 1242–1249 is a binding site for ATP; that stretch reads GAVGSGKS. A DECH box motif is present at residues 1331-1334; that stretch reads DECH. The 160-residue stretch at 1400-1559 folds into the Helicase C-terminal domain; the sequence is DVVQFGSNVL…NLPVMTGGVS (160 aa). A Nuclear localization signal motif is present at residues 1884–1892; sequence RKKGKGKGT. O-(5'-phospho-RNA)-tyrosine is present on Tyr1907. Residues 1949 to 1964 form an interaction with host EIF4E region; the sequence is KMVENDDIEMQALGSN. A Peptidase C4 domain is found at 2032 to 2250; sequence AKSLMRGLRD…VLWGPLKLKD (219 aa). Active-site for nuclear inclusion protein A activity residues include His2077, Asp2112, and Cys2182. A RdRp catalytic domain is found at 2519-2643; the sequence is WVYCDADGSQ…AVNPEKESIL (125 aa). A disordered region spans residues 2798-2841; sequence NDTIDAGGSNKKDAKPEQGSIQPNPNKGKDKDVNAGTSGTHTVP. Thr3046 carries the post-translational modification Phosphothreonine.

The protein belongs to the potyviridae genome polyprotein family. As to quaternary structure, interacts with host eIF4E protein (via cap-binding region); this interaction mediates the translation of the VPg-viral RNA conjugates. Part of a complex that comprises VPg, RNA, host EIF4E and EIF4G; this interaction mediates the translation of the VPg-viral RNA conjugates. Interaction is possible in susceptible hosts but impaired in resistant plants: the VPg of strain LYE84 interacts with tomato eIF4E1 and eIF4E2 as well as with the Capsicum annuum eIF4E1 susceptible allele pvr2(+) but not with resistant alleles pvr2(1), pvr2(2), pvr2(3), pvr2(4), pvr2(5), pvr2(6), pvr2(7), pvr2(8) and pvr2(9), the VPg of strain SON41 interacts with C.annuum eIF4E1 susceptible alleles pvr2(+), pvr2(1), pvr2(2), pvr2(3) and pvr2(4) but not with resistant alleles pvr2(5), pvr2(6), pvr2(7), pvr2(8) and pvr2(9), the VPg of strain LYE90 interacts only with tomato eIF4E1. VPg is uridylylated by the polymerase and is covalently attached to the 5'-end of the genomic RNA. This uridylylated form acts as a nucleotide-peptide primer for the polymerase. Post-translationally, potyviral RNA is expressed as two polyproteins which undergo post-translational proteolytic processing. Genome polyprotein is processed by NIa-pro, P1 and HC-pro proteinases resulting in the production of at least ten individual proteins. P3N-PIPO polyprotein is cleaved by P1 and HC-pro proteinases resulting in the production of three individual proteins. The P1 proteinase and the HC-pro cleave only their respective C-termini autocatalytically. 6K1 is essential for proper proteolytic separation of P3 from CI.

It is found in the host cytoplasmic vesicle. It localises to the host nucleus. The protein resides in the virion. It catalyses the reaction RNA(n) + a ribonucleoside 5'-triphosphate = RNA(n+1) + diphosphate. The catalysed reaction is Hydrolyzes glutaminyl bonds, and activity is further restricted by preferences for the amino acids in P6 - P1' that vary with the species of potyvirus, e.g. Glu-Xaa-Xaa-Tyr-Xaa-Gln-|-(Ser or Gly) for the enzyme from tobacco etch virus. The natural substrate is the viral polyprotein, but other proteins and oligopeptides containing the appropriate consensus sequence are also cleaved.. The enzyme catalyses Hydrolyzes a Gly-|-Gly bond at its own C-terminus, commonly in the sequence -Tyr-Xaa-Val-Gly-|-Gly, in the processing of the potyviral polyprotein.. In terms of biological role, required for aphid transmission and also has proteolytic activity. Only cleaves a Gly-Gly dipeptide at its own C-terminus. Interacts with virions and aphid stylets. Acts as a suppressor of RNA-mediated gene silencing, also known as post-transcriptional gene silencing (PTGS), a mechanism of plant viral defense that limits the accumulation of viral RNAs. May have RNA-binding activity. Its function is as follows. Has helicase activity. It may be involved in replication. Indispensable for virus replication. Reduces the abundance of host transcripts related to jasmonic acid biosynthesis therefore altering the host defenses. In order to increase its own stability, decreases host protein degradation pathways. Functionally, indispensable for virus replication. In terms of biological role, mediates the cap-independent, EIF4E-dependent translation of viral genomic RNAs. Binds to the cap-binding site of host EIF4E and thus interferes with the host EIF4E-dependent mRNA export and translation. VPg-RNA directly binds EIF4E and is a template for transcription. Also forms trimeric complexes with EIF4E-EIF4G, which are templates for translation. Its function is as follows. Has RNA-binding and proteolytic activities. An RNA-dependent RNA polymerase that plays an essential role in the virus replication. Functionally, involved in aphid transmission, cell-to-cell and systemis movement, encapsidation of the viral RNA and in the regulation of viral RNA amplification. The polypeptide is Genome polyprotein (Potato virus Y (strain N) (PVY)).